The following is a 363-amino-acid chain: RNA polymerase II holoenzyme cyclin-like subunit (363 aa).

The Cyclin N-terminal domain maps to 53–143 (YQMLRLAKNL…IGECEFWLIS (91 aa)). Residues 252 to 312 (TPGGSGSPAM…SPQKEKSKLQ (61 aa)) are disordered. A compositionally biased stretch (polar residues) spans 265–276 (IQQNPPNQAYQL). Positions 277–298 (TPQQQEMFRQQQMQQQNRQPET) are enriched in low complexity. The segment covering 299-310 (QAKDSPQKEKSK) has biased composition (basic and acidic residues).

It belongs to the cyclin family. Cyclin C subfamily. In terms of assembly, component of the SRB8-11 complex, a regulatory module of the Mediator complex.

It localises to the nucleus. Functionally, component of the SRB8-11 complex. The SRB8-11 complex is a regulatory module of the Mediator complex which is itself involved in regulation of basal and activated RNA polymerase II-dependent transcription. The SRB8-11 complex may be involved in the transcriptional repression of a subset of genes regulated by Mediator. It may inhibit the association of the Mediator complex with RNA polymerase II to form the holoenzyme complex. The SRB8-11 complex phosphorylates the C-terminal domain (CTD) of the largest subunit of RNA polymerase II. The chain is RNA polymerase II holoenzyme cyclin-like subunit (SSN8) from Pyricularia oryzae (strain 70-15 / ATCC MYA-4617 / FGSC 8958) (Rice blast fungus).